The following is a 161-amino-acid chain: S-ribosylhomocysteine lyase (161 aa).

The Fe cation site is built by histidine 58, histidine 62, and cysteine 128.

The protein belongs to the LuxS family. In terms of assembly, homodimer. Requires Fe cation as cofactor.

The catalysed reaction is S-(5-deoxy-D-ribos-5-yl)-L-homocysteine = (S)-4,5-dihydroxypentane-2,3-dione + L-homocysteine. Its function is as follows. Involved in the synthesis of autoinducer 2 (AI-2) which is secreted by bacteria and is used to communicate both the cell density and the metabolic potential of the environment. The regulation of gene expression in response to changes in cell density is called quorum sensing. Catalyzes the transformation of S-ribosylhomocysteine (RHC) to homocysteine (HC) and 4,5-dihydroxy-2,3-pentadione (DPD). This is S-ribosylhomocysteine lyase from Bifidobacterium adolescentis (strain ATCC 15703 / DSM 20083 / NCTC 11814 / E194a).